The sequence spans 221 residues: tRNA (guanine-N(7)-)-methyltransferase (221 aa).

Residues glutamate 46, aspartate 71, and aspartate 120 each coordinate S-adenosyl-L-methionine. Aspartate 120 is a catalytic residue. Aspartate 156 serves as a coordination point for substrate.

The protein belongs to the class I-like SAM-binding methyltransferase superfamily. TrmB family.

It carries out the reaction guanosine(46) in tRNA + S-adenosyl-L-methionine = N(7)-methylguanosine(46) in tRNA + S-adenosyl-L-homocysteine. The protein operates within tRNA modification; N(7)-methylguanine-tRNA biosynthesis. In terms of biological role, catalyzes the formation of N(7)-methylguanine at position 46 (m7G46) in tRNA. The protein is tRNA (guanine-N(7)-)-methyltransferase of Cytophaga hutchinsonii (strain ATCC 33406 / DSM 1761 / CIP 103989 / NBRC 15051 / NCIMB 9469 / D465).